The following is a 306-amino-acid chain: Tryptophan 2,3-dioxygenase (306 aa).

Residues 1–33 (MQPPGDDAAPRCPFAGAHAPDAPHVPEAAGDDA) are disordered. Residues 75–79 (FIIQH), tyrosine 137, and arginine 141 contribute to the substrate site. Histidine 264 provides a ligand contact to heme. Threonine 278 provides a ligand contact to substrate.

Belongs to the tryptophan 2,3-dioxygenase family. As to quaternary structure, homotetramer. The cofactor is heme.

It catalyses the reaction L-tryptophan + O2 = N-formyl-L-kynurenine. It functions in the pathway amino-acid degradation; L-tryptophan degradation via kynurenine pathway; L-kynurenine from L-tryptophan: step 1/2. In terms of biological role, heme-dependent dioxygenase that catalyzes the oxidative cleavage of the L-tryptophan (L-Trp) pyrrole ring and converts L-tryptophan to N-formyl-L-kynurenine. Catalyzes the oxidative cleavage of the indole moiety. The polypeptide is Tryptophan 2,3-dioxygenase (Burkholderia pseudomallei (strain 668)).